We begin with the raw amino-acid sequence, 666 residues long: MSKHVEQLAVNTIRTLSIDSVEKANSGHPGMPMGAAPMAFCLWTKFMNHNPANPDWVNRDRFVLSAGHGSMLLYSLLHLTGYDLSLEELQNFRQWGSKTPGHPEYGHTPGVEATTGPLGQGVAMAVGMAMAERHLAATYNRDGYNIVDHYTYTICGDGDLMEGVSAEAASLAGHLKLGRMILLYDSNDISLDGDLHHSFSESVEDRFKAYGWHVVRVEDGNNLDEIAKAIEEAKADERPSLIEVKTTIGFGSPNKGGKSVSHGAPLGADEVKLTKEAYEWTYENEFHIPEEVAAYYEQVKQQGAEKEESWNELFAQYKKAYPELASQFELAVHGDLPEGWDAVAPSYEVGKSVATRSSSGEALNAFAKTVPQLFGGSADLASSNKTLIKGEANFSRDDYSGRNVWFGVREFAMGAAMNGMALHGGLKVFGATFFVFSDYLRPAIRLAALMQLPVIYVFTHDSIAVGEDGPTHEPVEQLASLRAMPGLSVIRPADGNESVAAWKLALESKDQPTALVLSRQNLPTLEGAVDRAYDGVSKGAYVLAPANGSADLLLLASGSEVSLAVNAKEALEKEGIHAAVVSMPSWDRFEAQSAEYKEEVLPSDVTARLAIEMGSSLGWAKYVGNQGDVVAIDRFGASAPGERIMEEFGFTVQHVVARAKALLENK.

His-28 is a substrate binding site. Thiamine diphosphate contacts are provided by residues His-68 and 116-118 (GPL). Position 157 (Asp-157) interacts with Mg(2+). Residues Gly-158 and Asn-187 each coordinate thiamine diphosphate. Mg(2+) is bound by residues Asn-187 and Ile-189. The substrate site is built by His-262, Arg-356, and Ser-383. Position 262 (His-262) interacts with thiamine diphosphate. The active-site Proton donor is the Glu-410. Phe-436 is a thiamine diphosphate binding site. Positions 460, 468, and 519 each coordinate substrate.

This sequence belongs to the transketolase family. In terms of assembly, homodimer. Requires Mg(2+) as cofactor. It depends on Ca(2+) as a cofactor. Mn(2+) is required as a cofactor. Co(2+) serves as cofactor. The cofactor is thiamine diphosphate.

It carries out the reaction D-sedoheptulose 7-phosphate + D-glyceraldehyde 3-phosphate = aldehydo-D-ribose 5-phosphate + D-xylulose 5-phosphate. In terms of biological role, catalyzes the transfer of a two-carbon ketol group from a ketose donor to an aldose acceptor, via a covalent intermediate with the cofactor thiamine pyrophosphate. This is Transketolase (tkt) from Halalkalibacterium halodurans (strain ATCC BAA-125 / DSM 18197 / FERM 7344 / JCM 9153 / C-125) (Bacillus halodurans).